Reading from the N-terminus, the 326-residue chain is Malate dehydrogenase (326 aa).

12–18 lines the NAD(+) pocket; it reads GGTGQIA. Arginine 93 and arginine 99 together coordinate substrate. Residues asparagine 106, glutamine 113, and 130 to 132 contribute to the NAD(+) site; that span reads VGN. The substrate site is built by asparagine 132 and arginine 163. Catalysis depends on histidine 188, which acts as the Proton acceptor.

Belongs to the LDH/MDH superfamily. MDH type 2 family.

The catalysed reaction is (S)-malate + NAD(+) = oxaloacetate + NADH + H(+). Its function is as follows. Catalyzes the reversible oxidation of malate to oxaloacetate. In Chlamydia muridarum (strain MoPn / Nigg), this protein is Malate dehydrogenase.